The sequence spans 558 residues: MAKNRRDRNSWGGFSEKTYEWSSEEEEPVKKAGPVQVLIVKDDHSFELDETALNRILLSEAVRDKEVVAVSVAGAFRKGKSFLMDFMLRYMYNQESVDWVGDYNEPLTGFSWRGGSERETTGIQIWSEVFLINKPDGKKVAVLLMDTQGTFDSQSTLRDSATVFALSTMISSIQVYNLSQNVQEDDLQHLQLFTEYGRLAMEETFLKPFQSLIFLVRDWSFPYEFSYGADGGAKFLEKRLKVSGNQHEELQNVRKHIHSCFTNISCFLLPHPGLKVATNPNFDGKLKEIDDEFIKNLKILIPWLLSPESLDIKEINGNKITCRGLVEYFKAYIKIYQGEELPHPKSMLQATAEANNLAAVATAKDTYNKKMEEICGGDKPFLAPNDLQSKHLQLKEESVKLFRGVKKMGGEEFSRRYLQQLESEIDELYIQYIKHNDSKNIFHAARTPATLFVVIFITYVIAGVTGFIGLDIIASLCNMIMGLTLITLCTWAYIRYSGEYRELGAVIDQVAAALWDQGSTNEALYKLYSAAATHRHLYHQAFPTPKSESTEQSEKKKM.

Residues M1–E27 form a disordered region. The interval M1–P34 is N-terminal hypervariable region (HVR). Residues M1–A449 lie on the Cytoplasmic side of the membrane. 3 positions are modified to phosphoserine: S10, S22, and S23. Residues D64–S309 enclose the GB1/RHD3-type G domain. Positions 77, 78, 79, 80, 81, 82, 148, 217, 218, 276, and 279 each coordinate GDP. GTP-binding residues include R77, K78, G79, K80, S81, and F82. S81 contacts Mg(2+). R217, D218, and V276 together coordinate GTP. The interval M347–S438 is 3HB (three-helix bundle) domain. K395 is modified (N6-acetyllysine). Residues E412–K439 are a coiled coil. The tract at residues K439–T447 is linker. Residues T450 to L470 form a helical membrane-spanning segment. Position 471 (D471) is a topological domain, lumenal. A helical membrane pass occupies residues I472 to A492. The Cytoplasmic segment spans residues Y493 to M558. The interval N521 to M558 is autoinhibitory domain.

Belongs to the TRAFAC class dynamin-like GTPase superfamily. GB1/RHD3 GTPase family. GB1 subfamily. Monomeric and homodimeric. The homodimer, transiently formed by two molecules on opposing membranes, is the active form mediating ER membrane fusion. Interacts with REEP1, REEP5, RTN3 and RTN4 (via the transmembrane region); these proteins are involved in endoplasmic reticulum tubular network organization. Interacts with ZFYVE27; both proteins are involved in endoplasmic reticulum tubular network organization. Interacts with ARL6IP1; both proteins are involved in endoplasmic reticulum tubular network organization. Interacts with SPAST; the interaction is direct, could recruit SPAST to Golgi membranes. Interacts (via N-terminal region) with MAP4K4 (via CNH regulatory domain). May interact with TMED2. Interacts with CPT1C. Post-translationally, phosphorylated. Phosphorylation, by different kinases, of the N-terminal hypervariable region (HVR) regulates the ATL1-mediated membrane tethering step.

The protein resides in the endoplasmic reticulum membrane. It is found in the golgi apparatus membrane. The protein localises to the cell projection. Its subcellular location is the axon. It carries out the reaction GTP + H2O = GDP + phosphate + H(+). Atlastin-1 (ATL1) is a membrane-anchored GTPase that mediates the GTP-dependent fusion of endoplasmic reticulum (ER) membranes, maintaining the continuous ER network. It facilitates the formation of three-way junctions where ER tubules intersect. Two atlastin-1 on neighboring ER tubules bind GTP and form loose homodimers through the GB1/RHD3-type G domains and 3HB regions. Upon GTP hydrolysis, the 3HB regions tighten, pulling the membranes together to drive their fusion. After fusion, the homodimer disassembles upon release of inorganic phosphate (Pi). Subsequently, GDP dissociates, resetting the monomers to a conformation ready for a new fusion cycle. May also regulate more or less directly Golgi biogenesis. Indirectly regulates axonal development. The protein is Atlastin-1 of Macaca fascicularis (Crab-eating macaque).